The chain runs to 319 residues: ATP-dependent 6-phosphofructokinase (319 aa).

An ATP-binding site is contributed by glycine 11. 21–25 (RAAVR) contributes to the ADP binding site. ATP is bound by residues 72–73 (RS) and 102–105 (GDGS). Aspartate 103 is a binding site for Mg(2+). 125 to 127 (TID) contacts substrate. Residue aspartate 127 is the Proton acceptor of the active site. Residue arginine 154 coordinates ADP. Substrate-binding positions include arginine 162 and 169–171 (MGR). ADP contacts are provided by residues 185–187 (GAE), arginine 211, and 213–215 (KKH). Residues glutamate 222, arginine 243, and 249-252 (HIQR) contribute to the substrate site.

It belongs to the phosphofructokinase type A (PFKA) family. ATP-dependent PFK group I subfamily. Prokaryotic clade 'B1' sub-subfamily. Homotetramer. Requires Mg(2+) as cofactor.

It is found in the cytoplasm. The catalysed reaction is beta-D-fructose 6-phosphate + ATP = beta-D-fructose 1,6-bisphosphate + ADP + H(+). It participates in carbohydrate degradation; glycolysis; D-glyceraldehyde 3-phosphate and glycerone phosphate from D-glucose: step 3/4. Allosterically activated by ADP and other diphosphonucleosides, and allosterically inhibited by phosphoenolpyruvate. Its function is as follows. Catalyzes the phosphorylation of D-fructose 6-phosphate to fructose 1,6-bisphosphate by ATP, the first committing step of glycolysis. This is ATP-dependent 6-phosphofructokinase from Brevibacillus brevis (strain 47 / JCM 6285 / NBRC 100599).